A 520-amino-acid chain; its full sequence is Cell division control protein 3 (520 aa).

Over residues 1-24 (MSLKEEQVSIKQDPEQEERQHDQF) the composition is skewed to basic and acidic residues. Residues 1–83 (MSLKEEQVSI…SSQSEKGQVL (83 aa)) form a disordered region. The residue at position 2 (serine 2) is an N-acetylserine. Serine 2 carries the phosphoserine modification. A Glycyl lysine isopeptide (Lys-Gly) (interchain with G-Cter in SUMO) cross-link involves residue lysine 4. Serine 9 carries the phosphoserine modification. Glycyl lysine isopeptide (Lys-Gly) (interchain with G-Cter in SUMO) cross-links involve residues lysine 11 and lysine 30. Residue threonine 47 is modified to Phosphothreonine. A compositionally biased stretch (basic and acidic residues) spans 51 to 64 (DSERFEAAESDVKV). At serine 60 the chain carries Phosphoserine. Residue lysine 63 forms a Glycyl lysine isopeptide (Lys-Gly) (interchain with G-Cter in SUMO) linkage. At serine 77 the chain carries Phosphoserine. The Septin-type G domain occupies 116–411 (NGFSFNLLCV…ENYRSSKLAK (296 aa)). The tract at residues 126-133 (GPDGIGKT) is G1 motif. 126–133 (GPDGIGKT) is a binding site for GTP. Residues 156–167 (ELANDQEEEEGQ) are compositionally biased toward acidic residues. The interval 156–181 (ELANDQEEEEGQGEGHENQSQEQRHK) is disordered. The segment covering 168 to 179 (GEGHENQSQEQR) has biased composition (basic and acidic residues). At serine 175 the chain carries Phosphoserine. The G3 motif stretch occupies residues 204 to 207 (DTEG). GTP is bound by residues glycine 207, 287-295 (KSDILTDEE), glycine 344, and arginine 360. The G4 motif stretch occupies residues 286–289 (AKSD). Lysine 287 is covalently cross-linked (Glycyl lysine isopeptide (Lys-Gly) (interchain with G-Cter in SUMO)). A coiled-coil region spans residues 427 to 508 (ISKQQEEKTL…INSASPNVNH (82 aa)). Threonine 468 bears the Phosphothreonine mark. The interval 496-520 (ELSINSASPNVNHSPVPTKKKGFLR) is disordered. The span at 497-510 (LSINSASPNVNHSP) shows a compositional bias: polar residues. Position 509 is a phosphoserine (serine 509).

Belongs to the TRAFAC class TrmE-Era-EngA-EngB-Septin-like GTPase superfamily. Septin GTPase family. Component of the septin complex which consists of CDC3, CDC10, CDC11, CDC12 and probably SHS1 and rearranges to a cortical collar of highly ordered filaments at the mother-bud-neck. A complex formed by CDC3, CDC10, CDC11 and CDC12 is capable of forming long filaments in vitro and the components seem to be present in a 2:2:2:2 arrangement in vivo. The filaments are proposed to be formed by the end-to-end polymerization of CDC3-CDC12-CDC11 complexes with CDC10 serving as a bridge to bundle the polymers into paired filaments. Component of the GIN4 complex composed of at least BNI5, CDC3, CDC10, CDC11, CDC12, GIN4, NAP1 and SHS1. Self-associates. Interacts with SIZ1 and SYP1. Post-translationally, phosphorylated by CDC28. Phosphorylation at the end of G1 may facilitate initiation of a new cell cycle by promoting disassembly of the obsolete septin ring from the previous cell cycle. Sumoylated during mitosis on the mother cell side of the bud neck by UBC9/SIZ1. Sumoylation probably plays a central role in regulating septin ring disassembly during the cell cycle.

Its subcellular location is the membrane. It is found in the bud neck. Functionally, septins are GTPases involved in cytokinesis that assemble early in the cell cycle as a patch at the incipient bud site and form a ring approximate 15 minutes before bud emergence, which transforms into an hour-glass shaped collar of cortical filaments that spans both sides of the mother-bud neck. This collar persists until just before cytokinesis, when it splits into two rings that occupy opposite sides of the neck. The septins at the bud neck serve as a structural scaffold that recruits different components involved in diverse processes at specific stages during the cell cycle. Many proteins bind asymmetrically to the septin collar. The septin assembly is regulated by protein kinases GIN4 and/or CLA4. May act by recruiting MYO1 and HOF1, a protein involved in septation, to the site of cleavage. Septins are also involved in cell morphogenesis, bud site selection, chitin deposition, cell cycle regulation, cell compartmentalization and spore wall formation. The protein is Cell division control protein 3 (CDC3) of Saccharomyces cerevisiae (strain ATCC 204508 / S288c) (Baker's yeast).